The chain runs to 140 residues: Ribonucleases P/MRP protein subunit POP7 (140 aa).

Residues 1–21 (MALKKNTHNKSTKRVTKHPSL) form a disordered region. Position 115 is a phosphoserine (serine 115).

The protein belongs to the histone-like Alba family. Component of nuclear RNase P and RNase MRP complexes. RNase P consists of an RNA moiety and at least 9 protein subunits including POP1, POP3, POP4, POP5, POP6, POP7, POP8, RPP1 and RPR2. RNase MRP complex consists of an RNA moiety and at least 10 protein subunits including POP1, POP3, POP4, POP5, POP6, POP7, POP8, RMP1, RPP1 and SNM1, many of which are shared with the RNase P complex.

Its subcellular location is the nucleus. It carries out the reaction Endonucleolytic cleavage of RNA, removing 5'-extranucleotides from tRNA precursor.. Functionally, component of ribonuclease P, a protein complex that generates mature tRNA molecules by cleaving their 5'-ends. Also a component of RNase MRP, which cleaves pre-rRNA sequences. The polypeptide is Ribonucleases P/MRP protein subunit POP7 (POP7) (Saccharomyces cerevisiae (strain ATCC 204508 / S288c) (Baker's yeast)).